A 471-amino-acid polypeptide reads, in one-letter code: 3-hydroxylaminophenol mutase (471 aa).

The region spanning 15–100 (NDVKFVDFRF…TCDVVEPSDG (86 aa)) is the GS beta-grasp domain. Positions 107-471 (PRSIAKRAEA…PVEFEMYYSL (365 aa)) constitute a GS catalytic domain.

It belongs to the glutamine synthetase family.

It carries out the reaction 3-hydroxyaminophenol = aminohydroquinone. Its activity is regulated as follows. Is inhibited by H(2)O(2). 1,10-phenanthroline inhibits the activity slightly, but other metal cation chelators such as EDTA or tiron have no effect on the activity. Divalent metal cations and hydroxylamine have also no effect on the activity. Due to the relationship of the protein with glutamine synthetases, glutamate and glutamine were tested as inhibitors; neither preincubation of the compounds with the enzyme nor their addition to the assay buffer affected 3HAP mutase activity. In terms of biological role, catalyzes the isomerization of 3-hydroxylaminophenol (3HAP) to aminohydroquinone, a step in the degradative pathway of 3-nitrophenol. The enzymatic reaction is regiospecific since it leads to the formation of aminohydroquinone exclusively, without producing the isomeric 4-aminocatechol. Can also isomerize other hydroxylaminoaromatic compounds, such as hydroxylaminobenzene to a mixture of 2-aminophenol and 4-aminophenol, 4-hydroxylaminotoluene to 6-amino-m-cresol, and 2-chloro-5-hydroxylaminophenol to 2-amino-5-chlorohydroquinone. Does not act on 4-hydroxylaminobenzoate. The protein is 3-hydroxylaminophenol mutase of Cupriavidus pinatubonensis (strain JMP 134 / LMG 1197) (Cupriavidus necator (strain JMP 134)).